The primary structure comprises 133 residues: Phosphomevalonate dehydratase small subunit (133 aa).

Ser-62 functions as the Proton acceptor in the catalytic mechanism.

Belongs to the AcnX type II small subunit family. In terms of assembly, heterodimer composed of a large subunit (PMDh-L) and a small subunit (PMDh-S).

The enzyme catalyses (R)-5-phosphomevalonate = (2E)-3-methyl-5-phosphooxypent-2-enoate + H2O. It participates in isoprenoid biosynthesis; isopentenyl diphosphate biosynthesis via mevalonate pathway. In terms of biological role, component of a hydro-lyase that catalyzes the dehydration of mevalonate 5-phosphate (MVA5P) to form trans-anhydromevalonate 5-phosphate (tAHMP). Involved in the archaeal mevalonate (MVA) pathway, which provides fundamental precursors for isoprenoid biosynthesis, such as isopentenyl diphosphate (IPP) and dimethylallyl diphosphate (DMAPP). This chain is Phosphomevalonate dehydratase small subunit, found in Thermococcus kodakarensis (strain ATCC BAA-918 / JCM 12380 / KOD1) (Pyrococcus kodakaraensis (strain KOD1)).